Reading from the N-terminus, the 426-residue chain is Tektin-1 (426 aa).

3 coiled-coil regions span residues 21–84, 268–307, and 339–383; these read KNQY…LEQL, LKET…LDQE, and KEVG…ENTI. The segment at 396 to 426 is disordered; sequence SNPLRDGGDQGQWARACAPTPSAEDGTSHTD.

This sequence belongs to the tektin family. In terms of assembly, microtubule inner protein component of sperm flagellar doublet microtubules. Ubiquitinated, leading to its degradation. Deubiquitinated by USP16, promoting its stability.

The protein localises to the cytoplasm. It is found in the cytoskeleton. Its subcellular location is the cilium axoneme. It localises to the flagellum axoneme. Its function is as follows. Microtubule inner protein (MIP) part of the dynein-decorated doublet microtubules (DMTs) in cilia and flagellar axoneme. Forms filamentous polymers in the walls of ciliary and flagellar microtubules. This Canis lupus familiaris (Dog) protein is Tektin-1 (TEKT1).